The chain runs to 117 residues: Transcription elongation factor A protein-like 8 (117 aa).

Basic and acidic residues-rich tracts occupy residues 1–24 (MQKS…DRPL) and 61–74 (YKED…DPEE). The segment at 1 to 74 (MQKSCGENER…SPVRHLDPEE (74 aa)) is disordered. Residues 73–100 (EEMIRGADELERLREEIRRVRNKFVMMH) adopt a coiled-coil conformation.

This sequence belongs to the TFS-II family. TFA subfamily.

It is found in the nucleus. May be involved in transcriptional regulation. This Bos taurus (Bovine) protein is Transcription elongation factor A protein-like 8 (TCEAL8).